Here is a 312-residue protein sequence, read N- to C-terminus: Taste receptor type 2 member 103 (312 aa).

The Extracellular portion of the chain corresponds to 1–16 (MVVTMRAALRLMLIST). A helical transmembrane segment spans residues 17–37 (VSLELIIGILANVFIALVNII). Over 38-65 (DWIKRGKISAVDKIYMGLAISRTAFVLS) the chain is Cytoplasmic. The chain crosses the membrane as a helical span at residues 66–86 (VITGFLIAFLDPASLGIGIMI). At 87 to 92 (RLLTMS) the chain is on the extracellular side. A helical membrane pass occupies residues 93-113 (WTVTNHFSVWFATCLSIFYFL). The Cytoplasmic segment spans residues 114-133 (KITNFSNTVFLALKWKVKKV). Residues 134–154 (VSVTLVVSLIILFINVIVIHI) traverse the membrane as a helical segment. Over 155-184 (YTDRFQVNMVQKCGANNTLRAYGLFLSIST) the chain is Extracellular. Asn-170 is a glycosylation site (N-linked (GlcNAc...) asparagine). The chain crosses the membrane as a helical span at residues 185–205 (VFTFIPFTASLTMFLLLIFSL). At 206–229 (WRHLKTMHHNATGSRDVSTVAHIK) the chain is on the cytoplasmic side. The helical transmembrane segment at 230 to 250 (GLQTVVAFLLLYTVFAMSLFS) threads the bilayer. The Extracellular segment spans residues 251 to 264 (QSLSIDAQHTNLLS). Residues 265–285 (HFLRCIGVAFPSGHSCALILG) form a helical membrane-spanning segment. Over 286–312 (NNKLRQASLSVIFWLRCKYKHTENQGP) the chain is Cytoplasmic.

The protein belongs to the G-protein coupled receptor T2R family.

The protein localises to the membrane. Its function is as follows. Gustducin-coupled receptor implicated in the perception of bitter compounds in the oral cavity and the gastrointestinal tract. Signals through PLCB2 and the calcium-regulated cation channel TRPM5. The protein is Taste receptor type 2 member 103 of Rattus norvegicus (Rat).